The sequence spans 32 residues: Zinc metalloproteinase/disintegrin-like CdtV1 (32 aa).

Disulfide bonds link Cys-5–Cys-14 and Cys-7–Cys-15.

Belongs to the venom metalloproteinase (M12B) family. P-II subfamily. P-IIa sub-subfamily. In terms of assembly, monomer. Expressed by the venom gland.

The protein resides in the secreted. In terms of biological role, snake venom metalloproteinase that impairs hemostasis in the envenomed animal. In Crotalus durissus terrificus (South American rattlesnake), this protein is Zinc metalloproteinase/disintegrin-like CdtV1.